Reading from the N-terminus, the 274-residue chain is Orotidine 5'-phosphate decarboxylase (274 aa).

Lysine 95 functions as the Proton donor in the catalytic mechanism.

It belongs to the OMP decarboxylase family. Type 2 subfamily.

The catalysed reaction is orotidine 5'-phosphate + H(+) = UMP + CO2. Its pathway is pyrimidine metabolism; UMP biosynthesis via de novo pathway; UMP from orotate: step 2/2. This is Orotidine 5'-phosphate decarboxylase from Verminephrobacter eiseniae (strain EF01-2).